The sequence spans 538 residues: Translation initiation factor IF-3, chloroplastic (538 aa).

The transit peptide at 1–140 directs the protein to the chloroplast; sequence MVRSSCLQCD…VTQRKEIAVF (140 aa). Residues 141 to 290 form a head region; it reads SASGQAAEPE…EEVEEEQEVL (150 aa). Disordered stretches follow at residues 146 to 165 and 188 to 210; these read AAEP…PAAK and RTDS…NWPS. The segment at 291–474 is IF-3 like; sequence SWADRRRALA…LILNLAPAGE (184 aa). Positions 484 to 538 are disordered; that stretch reads AERDRKAAAEEEGEGDDLDFVDENEDEDVEGEGEEEEAEELEEETAEGTEVPTRS. Positions 493-530 are enriched in acidic residues; sequence EEEGEGDDLDFVDENEDEDVEGEGEEEEAEELEEETAE.

It belongs to the IF-3 family. In terms of assembly, monomer. Post-translationally, the N-terminus is blocked.

Its subcellular location is the plastid. The protein localises to the chloroplast. Its function is as follows. Involved in chloroplast protein synthesis. It enhances the poly(A,U,G)-dependent binding of the initiator tRNA to chloroplast 30S subunits. This is Translation initiation factor IF-3, chloroplastic from Euglena gracilis.